A 179-amino-acid chain; its full sequence is Endoribonuclease YbeY (179 aa).

Residues His148, His152, and His158 each coordinate Zn(2+).

Belongs to the endoribonuclease YbeY family. Zn(2+) is required as a cofactor.

It localises to the cytoplasm. Single strand-specific metallo-endoribonuclease involved in late-stage 70S ribosome quality control and in maturation of the 3' terminus of the 16S rRNA. The protein is Endoribonuclease YbeY of Prochlorococcus marinus (strain MIT 9312).